A 468-amino-acid chain; its full sequence is ATP synthase subunit beta (468 aa).

148–155 lines the ATP pocket; sequence GGAGVGKT.

The protein belongs to the ATPase alpha/beta chains family. In terms of assembly, F-type ATPases have 2 components, CF(1) - the catalytic core - and CF(0) - the membrane proton channel. CF(1) has five subunits: alpha(3), beta(3), gamma(1), delta(1), epsilon(1). CF(0) has three main subunits: a(1), b(2) and c(9-12). The alpha and beta chains form an alternating ring which encloses part of the gamma chain. CF(1) is attached to CF(0) by a central stalk formed by the gamma and epsilon chains, while a peripheral stalk is formed by the delta and b chains.

The protein localises to the cell inner membrane. The catalysed reaction is ATP + H2O + 4 H(+)(in) = ADP + phosphate + 5 H(+)(out). In terms of biological role, produces ATP from ADP in the presence of a proton gradient across the membrane. The catalytic sites are hosted primarily by the beta subunits. The polypeptide is ATP synthase subunit beta (Xanthomonas euvesicatoria pv. vesicatoria (strain 85-10) (Xanthomonas campestris pv. vesicatoria)).